The following is an 81-amino-acid chain: Ferredoxin (81 aa).

In terms of domain architecture, 4Fe-4S ferredoxin-type spans 2 to 30; it reads KYTIVDKETCIACGACGAAAPDIYDYDED. [4Fe-4S] cluster is bound by residues C11, C14, C17, and C61.

It depends on [4Fe-4S] cluster as a cofactor.

Its function is as follows. Ferredoxins are iron-sulfur proteins that transfer electrons in a wide variety of metabolic reactions. The chain is Ferredoxin from Bacillus thermoproteolyticus.